A 179-amino-acid polypeptide reads, in one-letter code: Peptide deformylase 2 (179 aa).

Fe cation-binding residues include Cys-102 and His-144. The active site involves Glu-145. His-148 is a Fe cation binding site.

Belongs to the polypeptide deformylase family. It depends on Fe(2+) as a cofactor.

It catalyses the reaction N-terminal N-formyl-L-methionyl-[peptide] + H2O = N-terminal L-methionyl-[peptide] + formate. In terms of biological role, removes the formyl group from the N-terminal Met of newly synthesized proteins. Requires at least a dipeptide for an efficient rate of reaction. N-terminal L-methionine is a prerequisite for activity but the enzyme has broad specificity at other positions. In Nostoc sp. (strain PCC 7120 / SAG 25.82 / UTEX 2576), this protein is Peptide deformylase 2.